Here is a 600-residue protein sequence, read N- to C-terminus: tRNA(Ile)-lysidine synthase, chloroplastic (600 aa).

S35–S40 provides a ligand contact to ATP.

It belongs to the tRNA(Ile)-lysidine synthase family.

The protein resides in the plastid. Its subcellular location is the chloroplast. It carries out the reaction cytidine(34) in tRNA(Ile2) + L-lysine + ATP = lysidine(34) in tRNA(Ile2) + AMP + diphosphate + H(+). Functionally, ligates lysine onto the cytidine present at position 34 of the AUA codon-specific tRNA(Ile) that contains the anticodon CAU, in an ATP-dependent manner. Cytidine is converted to lysidine, thus changing the amino acid specificity of the tRNA from methionine to isoleucine. In Tupiella akineta (Green alga), this protein is tRNA(Ile)-lysidine synthase, chloroplastic.